Consider the following 185-residue polypeptide: Nucleoside triphosphate pyrophosphatase (185 aa).

Aspartate 70 (proton acceptor) is an active-site residue.

It belongs to the Maf family. A divalent metal cation serves as cofactor.

It localises to the cytoplasm. It catalyses the reaction a ribonucleoside 5'-triphosphate + H2O = a ribonucleoside 5'-phosphate + diphosphate + H(+). It carries out the reaction a 2'-deoxyribonucleoside 5'-triphosphate + H2O = a 2'-deoxyribonucleoside 5'-phosphate + diphosphate + H(+). In terms of biological role, nucleoside triphosphate pyrophosphatase. May have a dual role in cell division arrest and in preventing the incorporation of modified nucleotides into cellular nucleic acids. The sequence is that of Nucleoside triphosphate pyrophosphatase from Nitratiruptor sp. (strain SB155-2).